We begin with the raw amino-acid sequence, 426 residues long: MLDIKLIRKAPEECEIRLRKKDPNISLLPILDLDKEVRRLKTDSESLQSQRKLLSTQIHKAKAQGEDASNMISEVERISQDLEKLEASLEEKNATLQDLLVRLPNYPEEDVPVCPDKSGNQVIKSVGALPTFSFTPKHHVELNQKLQILDFKLPAKTSGSGWPAYKNQGVMLEWALLTYLLNKQREHGFQLWLPPLLVKREILFGSGQIPKFDGQYYCVEDGDQSLYLIPTAEVVLNGFHSQEIFNEKDLPIYYAACTPCFRREAGAAGANERGLVRVHQFNKVEMFAFTTPEQADQAYEKMLAVVEDILTELKLPYRLSLLSTGDMSFTASKTIDAEVWLPGQQSYYEVSSISQCTDFQSRRSETRYKDSQGKMHFIHTLNGSGLATPRLFVAILENNQQKDGSVVIPEVLRPYLGNQEVLLPQE.

L-serine is bound at residue 231-233; that stretch reads TAE. ATP contacts are provided by residues 262-264 and valine 278; that span reads RRE. Residue glutamate 285 participates in L-serine binding. 349-352 is an ATP binding site; the sequence is EVSS. An L-serine-binding site is contributed by serine 384.

Belongs to the class-II aminoacyl-tRNA synthetase family. Type-1 seryl-tRNA synthetase subfamily. Homodimer. The tRNA molecule binds across the dimer.

The protein localises to the cytoplasm. The catalysed reaction is tRNA(Ser) + L-serine + ATP = L-seryl-tRNA(Ser) + AMP + diphosphate + H(+). It carries out the reaction tRNA(Sec) + L-serine + ATP = L-seryl-tRNA(Sec) + AMP + diphosphate + H(+). It functions in the pathway aminoacyl-tRNA biosynthesis; selenocysteinyl-tRNA(Sec) biosynthesis; L-seryl-tRNA(Sec) from L-serine and tRNA(Sec): step 1/1. Catalyzes the attachment of serine to tRNA(Ser). Is also able to aminoacylate tRNA(Sec) with serine, to form the misacylated tRNA L-seryl-tRNA(Sec), which will be further converted into selenocysteinyl-tRNA(Sec). The chain is Serine--tRNA ligase from Chlamydia caviae (strain ATCC VR-813 / DSM 19441 / 03DC25 / GPIC) (Chlamydophila caviae).